The primary structure comprises 286 residues: Bifunctional protein FolD (286 aa).

Residues 165–167, Ser-190, and Val-231 contribute to the NADP(+) site; that span reads GRS.

Belongs to the tetrahydrofolate dehydrogenase/cyclohydrolase family. In terms of assembly, homodimer.

The catalysed reaction is (6R)-5,10-methylene-5,6,7,8-tetrahydrofolate + NADP(+) = (6R)-5,10-methenyltetrahydrofolate + NADPH. It carries out the reaction (6R)-5,10-methenyltetrahydrofolate + H2O = (6R)-10-formyltetrahydrofolate + H(+). It participates in one-carbon metabolism; tetrahydrofolate interconversion. Its function is as follows. Catalyzes the oxidation of 5,10-methylenetetrahydrofolate to 5,10-methenyltetrahydrofolate and then the hydrolysis of 5,10-methenyltetrahydrofolate to 10-formyltetrahydrofolate. The polypeptide is Bifunctional protein FolD (Bacillus cereus (strain ATCC 10987 / NRS 248)).